A 498-amino-acid polypeptide reads, in one-letter code: ATP synthase subunit beta, chloroplastic (498 aa).

Thr6 bears the Phosphothreonine mark. Residue Ser13 is modified to Phosphoserine. 172-179 (GGAGVGKT) serves as a coordination point for ATP.

It belongs to the ATPase alpha/beta chains family. As to quaternary structure, F-type ATPases have 2 components, CF(1) - the catalytic core - and CF(0) - the membrane proton channel. CF(1) has five subunits: alpha(3), beta(3), gamma(1), delta(1), epsilon(1). CF(0) has four main subunits: a(1), b(1), b'(1) and c(9-12).

It is found in the plastid. It localises to the chloroplast thylakoid membrane. It carries out the reaction ATP + H2O + 4 H(+)(in) = ADP + phosphate + 5 H(+)(out). In terms of biological role, produces ATP from ADP in the presence of a proton gradient across the membrane. The catalytic sites are hosted primarily by the beta subunits. The chain is ATP synthase subunit beta, chloroplastic from Barbarea verna (Land cress).